A 308-amino-acid chain; its full sequence is MNQTTHRCGWVALIGPPNAGKSTLLNALIGQKVAIVTSKPQTTRNQIVGILSRKDAQVVFMDTPGIHQLRGRLNKMLLQTAWQSMNAADALIVMLDGDLYIRKPDLLDRDIAPLVEPIAAETRPVVVVVNKIDLFRDKSKMLPLLERLSAMWPKAEVFPASALNKDGMDHLLRLIVGYMPEGPALYPEDQISTLPVRFMTAEIVREKVFNKLRQELPYSTAVDIEQWEEEEGRDQVIVNAVIYVARPSHKSMVIGKGGATIKEIGIEARKDIQELLEKRVHLELWVKVREGWTEDLGFMRSLGLSPDE.

Residues 7-181 form the Era-type G domain; the sequence is RCGWVALIGP…LRLIVGYMPE (175 aa). The G1 stretch occupies residues 15–22; it reads GPPNAGKS. 15 to 22 is a binding site for GTP; the sequence is GPPNAGKS. A G2 region spans residues 41–45; that stretch reads QTTRN. A G3 region spans residues 62 to 65; sequence DTPG. Residues 62 to 66 and 130 to 133 each bind GTP; these read DTPGI and NKID. The interval 130–133 is G4; that stretch reads NKID. Residues 160-162 form a G5 region; sequence ASA. A KH type-2 domain is found at 212 to 290; it reads LRQELPYSTA…HLELWVKVRE (79 aa).

It belongs to the TRAFAC class TrmE-Era-EngA-EngB-Septin-like GTPase superfamily. Era GTPase family. Monomer.

It localises to the cytoplasm. It is found in the cell inner membrane. Functionally, an essential GTPase that binds both GDP and GTP, with rapid nucleotide exchange. Plays a role in 16S rRNA processing and 30S ribosomal subunit biogenesis and possibly also in cell cycle regulation and energy metabolism. This Nitratidesulfovibrio vulgaris (strain DP4) (Desulfovibrio vulgaris) protein is GTPase Era.